The primary structure comprises 258 residues: Spindlin-2A (258 aa).

The span at 1–23 (MKTPNAQEAEGQQTRAAAGRATG) shows a compositional bias: low complexity. The disordered stretch occupies residues 1–49 (MKTPNAQEAEGQQTRAAAGRATGSANMTKKKVSQKKQRGRPSSQPRRNI). The segment covering 28–39 (TKKKVSQKKQRG) has biased composition (basic residues). Tudor-like domain regions lie at residues 50–99 (VGCR…LELH), 129–178 (IGKA…YQLL), and 210–255 (IGKH…YDLV). 2 histone H3K4me3 and H3R8me2a binding regions span residues Glu138 and 246–248 (DFH).

It belongs to the SPIN/STSY family. Interacts with C11orf84/SPINDOC.

The protein resides in the nucleus. Its function is as follows. May be involved in the regulation of cell cycle progression. Exhibits H3K4me3-binding activity. The polypeptide is Spindlin-2A (SPIN2A) (Homo sapiens (Human)).